Consider the following 105-residue polypeptide: uncharacterized protein (105 aa).

Residues 4–26 (TQILLILFVGILVTTPHDIFIII) traverse the membrane as a helical segment.

The protein resides in the membrane. This is an uncharacterized protein from Rickettsia conorii (strain ATCC VR-613 / Malish 7).